A 459-amino-acid chain; its full sequence is Zeatin O-glucosyltransferase (459 aa).

The active-site Proton acceptor is histidine 26. Histidine 26 contacts an anthocyanidin. The Charge relay role is filled by aspartate 125. Residues serine 148, alanine 335, glutamine 337, histidine 352, tryptophan 355, asparagine 356, serine 357, glutamate 360, aspartate 376, and glutamine 377 each contribute to the UDP-alpha-D-glucose site.

It belongs to the UDP-glycosyltransferase family.

It carries out the reaction trans-zeatin + UDP-alpha-D-glucose = O-beta-D-glucosyl-trans-zeatin + UDP + H(+). Functionally, may regulate active versus storage forms of cytokinins, and could have an impact on seed growth. Can also use UDP-xylose to catalyze the formation of O-xylosylzeatin but at much lower affinity. This Phaseolus lunatus (Lima bean) protein is Zeatin O-glucosyltransferase.